The sequence spans 124 residues: Small ribosomal subunit protein uS12 (124 aa).

Asp-89 bears the 3-methylthioaspartic acid mark. Residues 102–124 (LDTSGVNNRKHGRSKYGTKRPKS) are disordered. The segment covering 109-124 (NRKHGRSKYGTKRPKS) has biased composition (basic residues).

The protein belongs to the universal ribosomal protein uS12 family. Part of the 30S ribosomal subunit. Contacts proteins S8 and S17. May interact with IF1 in the 30S initiation complex.

In terms of biological role, with S4 and S5 plays an important role in translational accuracy. Interacts with and stabilizes bases of the 16S rRNA that are involved in tRNA selection in the A site and with the mRNA backbone. Located at the interface of the 30S and 50S subunits, it traverses the body of the 30S subunit contacting proteins on the other side and probably holding the rRNA structure together. The combined cluster of proteins S8, S12 and S17 appears to hold together the shoulder and platform of the 30S subunit. The sequence is that of Small ribosomal subunit protein uS12 from Francisella philomiragia subsp. philomiragia (strain ATCC 25017 / CCUG 19701 / FSC 153 / O#319-036).